A 505-amino-acid polypeptide reads, in one-letter code: Trans-cinnamate 4-monooxygenase C4H2 (505 aa).

2 short sequence motifs (nuclear localization signal) span residues 161–168 (VKKMKESN) and 247–254 (EKRLKLFK). C447 contacts heme.

The protein belongs to the cytochrome P450 family. Heme serves as cofactor.

The protein localises to the nucleus. It carries out the reaction (E)-cinnamate + reduced [NADPH--hemoprotein reductase] + O2 = (E)-4-coumarate + oxidized [NADPH--hemoprotein reductase] + H2O + H(+). It participates in phenylpropanoid metabolism; trans-4-coumarate biosynthesis; trans-4-coumarate from trans-cinnamate: step 1/1. Component of the floral volatile benzenoid/phenylpropanoid (FVBP) biosynthetic pathway that controls carbon flux to pigments essential for pollination or UV protection, to numerous pytoalexins synthesized by plants when challenged by pathogens, and to lignins. The sequence is that of Trans-cinnamate 4-monooxygenase C4H2 from Petunia hybrida (Petunia).